The following is a 184-amino-acid chain: ATP synthase subunit delta (184 aa).

This sequence belongs to the ATPase delta chain family. F-type ATPases have 2 components, F(1) - the catalytic core - and F(0) - the membrane proton channel. F(1) has five subunits: alpha(3), beta(3), gamma(1), delta(1), epsilon(1). F(0) has three main subunits: a(1), b(2) and c(10-14). The alpha and beta chains form an alternating ring which encloses part of the gamma chain. F(1) is attached to F(0) by a central stalk formed by the gamma and epsilon chains, while a peripheral stalk is formed by the delta and b chains.

It localises to the cell inner membrane. F(1)F(0) ATP synthase produces ATP from ADP in the presence of a proton or sodium gradient. F-type ATPases consist of two structural domains, F(1) containing the extramembraneous catalytic core and F(0) containing the membrane proton channel, linked together by a central stalk and a peripheral stalk. During catalysis, ATP synthesis in the catalytic domain of F(1) is coupled via a rotary mechanism of the central stalk subunits to proton translocation. In terms of biological role, this protein is part of the stalk that links CF(0) to CF(1). It either transmits conformational changes from CF(0) to CF(1) or is implicated in proton conduction. The polypeptide is ATP synthase subunit delta (Caulobacter sp. (strain K31)).